The chain runs to 172 residues: MAKFQPKVQDEGRDDGLREKMIAVNRVTKVVKGGRILGFAALTVVGDGDGRVGMGKGKSKEVPAAVQKAMEEARRNMVKVSLKNGTIHHNVTGHHGAAVVMMAPAPKGAGIIAGGPMRAVFEVLGVTDIVAKSHGSSNPYNMVRATFDALVHSTTASQVAAKRGKTVEDIFA.

In terms of domain architecture, S5 DRBM spans 17-80 (LREKMIAVNR…EEARRNMVKV (64 aa)).

The protein belongs to the universal ribosomal protein uS5 family. Part of the 30S ribosomal subunit. Contacts proteins S4 and S8.

Its function is as follows. With S4 and S12 plays an important role in translational accuracy. In terms of biological role, located at the back of the 30S subunit body where it stabilizes the conformation of the head with respect to the body. The chain is Small ribosomal subunit protein uS5 from Verminephrobacter eiseniae (strain EF01-2).